The chain runs to 274 residues: Ribosome biogenesis protein UTP30 (274 aa).

Belongs to the universal ribosomal protein uL1 family. Highly divergent. In terms of assembly, component of the 90S pre-ribosomes. Interacts with FAF1.

It is found in the nucleus. The protein resides in the nucleolus. Functionally, involved in rRNA-processing and ribosome biosynthesis. The protein is Ribosome biogenesis protein UTP30 (UTP30) of Saccharomyces cerevisiae (strain ATCC 204508 / S288c) (Baker's yeast).